A 212-amino-acid chain; its full sequence is NAD(P)H-hydrate epimerase (212 aa).

Positions 11–212 constitute a YjeF N-terminal domain; that stretch reads MRHYDSYTIN…ANDMGTYAVD (202 aa). 60–64 serves as a coordination point for (6S)-NADPHX; the sequence is NNGGD. K(+) is bound by residues Asn61 and Asp123. (6S)-NADPHX is bound by residues 127–133, Tyr138, and Asp156; that span reads GIGIDRA. Ser159 lines the K(+) pocket.

The protein belongs to the NnrE/AIBP family. It depends on K(+) as a cofactor.

The catalysed reaction is (6R)-NADHX = (6S)-NADHX. It carries out the reaction (6R)-NADPHX = (6S)-NADPHX. Its function is as follows. Catalyzes the epimerization of the S- and R-forms of NAD(P)HX, a damaged form of NAD(P)H that is a result of enzymatic or heat-dependent hydration. This is a prerequisite for the S-specific NAD(P)H-hydrate dehydratase to allow the repair of both epimers of NAD(P)HX. In Limosilactobacillus reuteri (strain ATCC 55730 / SD2112) (Lactobacillus reuteri), this protein is NAD(P)H-hydrate epimerase.